A 431-amino-acid chain; its full sequence is Putative serine/threonine-protein kinase B (431 aa).

The Protein kinase domain occupies 20-279 (YLNKGIVGLG…VRENFQIPYI (260 aa)). ATP is bound by residues 26–34 (VGLGSYGEG) and K49. D147 (proton acceptor) is an active-site residue. One can recognise a PH domain in the interval 331–429 (DVTHRGHVNK…WVHAIQRGIG (99 aa)).

This sequence belongs to the protein kinase superfamily. Ser/Thr protein kinase family.

It carries out the reaction L-seryl-[protein] + ATP = O-phospho-L-seryl-[protein] + ADP + H(+). It catalyses the reaction L-threonyl-[protein] + ATP = O-phospho-L-threonyl-[protein] + ADP + H(+). This Trypanosoma brucei brucei protein is Putative serine/threonine-protein kinase B (NRKB).